A 189-amino-acid polypeptide reads, in one-letter code: UPF0398 protein BH1768 (189 aa).

Belongs to the UPF0398 family.

The sequence is that of UPF0398 protein BH1768 from Halalkalibacterium halodurans (strain ATCC BAA-125 / DSM 18197 / FERM 7344 / JCM 9153 / C-125) (Bacillus halodurans).